We begin with the raw amino-acid sequence, 322 residues long: Aspartate carbamoyltransferase catalytic subunit (322 aa).

Positions 65 and 66 each coordinate carbamoyl phosphate. L-aspartate is bound at residue Lys93. Carbamoyl phosphate-binding residues include Arg115, His143, and Gln146. Arg176 and Arg230 together coordinate L-aspartate. Carbamoyl phosphate is bound by residues Gly271 and Pro272.

It belongs to the aspartate/ornithine carbamoyltransferase superfamily. ATCase family. As to quaternary structure, heterododecamer (2C3:3R2) of six catalytic PyrB chains organized as two trimers (C3), and six regulatory PyrI chains organized as three dimers (R2).

It catalyses the reaction carbamoyl phosphate + L-aspartate = N-carbamoyl-L-aspartate + phosphate + H(+). It functions in the pathway pyrimidine metabolism; UMP biosynthesis via de novo pathway; (S)-dihydroorotate from bicarbonate: step 2/3. In terms of biological role, catalyzes the condensation of carbamoyl phosphate and aspartate to form carbamoyl aspartate and inorganic phosphate, the committed step in the de novo pyrimidine nucleotide biosynthesis pathway. The chain is Aspartate carbamoyltransferase catalytic subunit from Brucella canis (strain ATCC 23365 / NCTC 10854 / RM-666).